The chain runs to 139 residues: MATNVGPQIRSGELVFGVAHIFASFNDTFVHITDLTGKETIVRVTGGMKVKTDRDESSPYAAMLAAQDAAAKCKEVGITALHIKIRATGGTATKTPGPGAQAALRALARAGMRIGRIEDVTPIPTDSTRRKGGRRGRRL.

A disordered region spans residues aspartate 119–leucine 139. Residues arginine 130–leucine 139 are compositionally biased toward basic residues.

This sequence belongs to the universal ribosomal protein uS11 family. Component of the small ribosomal subunit (SSU). Mature yeast ribosomes consist of a small (40S) and a large (60S) subunit. The 40S small subunit contains 1 molecule of ribosomal RNA (18S rRNA) and at least 33 different proteins. The large 60S subunit contains 3 rRNA molecules (25S, 5.8S and 5S rRNA) and at least 46 different proteins. uS11 interacts with eS1 forming part of the mRNA exit tunnel. uS11 interacts with snoRNA U3. uS11 interacts with MPP10. Component of the ribosomal small subunit (SSU) processome composed of at least 40 protein subunits and snoRNA U3.

The protein localises to the cytoplasm. Its subcellular location is the nucleus. It is found in the nucleolus. Functionally, component of the ribosome, a large ribonucleoprotein complex responsible for the synthesis of proteins in the cell. The small ribosomal subunit (SSU) binds messenger RNAs (mRNAs) and translates the encoded message by selecting cognate aminoacyl-transfer RNA (tRNA) molecules. The large subunit (LSU) contains the ribosomal catalytic site termed the peptidyl transferase center (PTC), which catalyzes the formation of peptide bonds, thereby polymerizing the amino acids delivered by tRNAs into a polypeptide chain. The nascent polypeptides leave the ribosome through a tunnel in the LSU and interact with protein factors that function in enzymatic processing, targeting, and the membrane insertion of nascent chains at the exit of the ribosomal tunnel. uS11 is involved in nucleolar processing of pre-18S ribosomal RNA and ribosome assembly. In Schizosaccharomyces pombe (strain 972 / ATCC 24843) (Fission yeast), this protein is Small ribosomal subunit protein uS11A (rps1401).